The primary structure comprises 323 residues: MDPKYQRVALNDGHFMPVLGFGTYAPPEVPRNRVVEVTKLAIEAGFRHIDSAYLYNNEEQVGLAIRSKIADGSVKREDIFYTSKLWCTFFRPQLVQPALESSLKKLQLDYVDLYLIHFPMALKPGETPLPKDENGKVMFDTVDLCAIWEAMEKCKDAGLAKSIGVSNFNRRQLEMILNNPGLKYKPVCNQVECHPYLNQSKLLDFCKSKDIVLVAHSALGTQRHKLWVDQNSPALLEDPVLCALAKKHKRSPALIALRYQLQRGVVVLAKSYNEQRIRENVQVFEFQLTSEDMKVLDDLNRNFRYVVMDFLVDHPDYPFSDEY.

Residues 20–24 (GFGTY) and Asp50 contribute to the NADP(+) site. The Proton donor role is filled by Tyr55. His117 is a binding site for substrate. NADP(+) contacts are provided by residues 166 to 167 (SN), Gln190, 216 to 221 (HSALGT), and 270 to 280 (KSYNEQRIREN).

This sequence belongs to the aldo/keto reductase family. Monomer.

It localises to the cytoplasm. The protein localises to the cytosol. The catalysed reaction is chlordecone alcohol + NADP(+) = chlordecone + NADPH + H(+). The enzyme catalyses a 3alpha-hydroxysteroid + NADP(+) = a 3-oxosteroid + NADPH + H(+). It carries out the reaction a 3alpha-hydroxysteroid + NAD(+) = a 3-oxosteroid + NADH + H(+). It catalyses the reaction 5alpha-androstane-3alpha,17beta-diol + NADP(+) = 17beta-hydroxy-5alpha-androstan-3-one + NADPH + H(+). The catalysed reaction is 5alpha-androstane-3beta,17beta-diol + NADP(+) = 17beta-hydroxy-5alpha-androstan-3-one + NADPH + H(+). The enzyme catalyses 5alpha-androstane-3alpha,17beta-diol + NAD(+) = 17beta-hydroxy-5alpha-androstan-3-one + NADH + H(+). It carries out the reaction 17beta-estradiol + NADP(+) = estrone + NADPH + H(+). It catalyses the reaction 17beta-estradiol + NAD(+) = estrone + NADH + H(+). The catalysed reaction is (20S)-hydroxypregn-4-en-3-one + NADP(+) = progesterone + NADPH + H(+). The enzyme catalyses (20S)-hydroxypregn-4-en-3-one + NAD(+) = progesterone + NADH + H(+). It carries out the reaction androsterone + NADP(+) = 5alpha-androstan-3,17-dione + NADPH + H(+). It catalyses the reaction testosterone + NADP(+) = androst-4-ene-3,17-dione + NADPH + H(+). The catalysed reaction is testosterone + NAD(+) = androst-4-ene-3,17-dione + NADH + H(+). The enzyme catalyses 3alpha-hydroxy-5alpha-androstane 17-O-(beta-D-glucuronate) + NADP(+) = 5alpha-dihydrotestosterone 17-O-(beta-D-glucuronate) + NADPH + H(+). It carries out the reaction (3beta,5alpha,17beta)-3-hydroxy-androstan-17-yl sulfate + NADP(+) = 5alpha-dihydrotestosterone sulfate + NADPH + H(+). It catalyses the reaction 5alpha-androstane-3alpha,17beta-diol + NAD(+) = androsterone + NADH + H(+). It participates in steroid metabolism. In terms of biological role, cytosolic aldo-keto reductase that catalyzes the NADH and NADPH-dependent reduction of ketosteroids to hydroxysteroids. Liver specific enzyme that acts as an NAD(P)(H)-dependent 3-, 17- and 20-ketosteroid reductase on the steroid nucleus and side chain. Displays the ability to catalyze both oxidation and reduction in vitro, but most probably acts as a reductase in vivo since the oxidase activity measured in vitro is inhibited by physiological concentration of NADPH. Acts preferentially as a 3-alpha-hydroxysteroid dehydrogenase (HSD) with a subsidiary 3-beta-HSD activity. Catalyzes efficiently the transformation of the potent androgen 5-alpha-dihydrotestosterone (5alpha-DHT or 17beta-hydroxy-5alpha-androstan-3-one) into the less active form, 5-alpha-androstan-3-alpha,17-beta-diol (3-alpha-diol). Catalyzes the reduction of estrone into 17beta-estradiol but with low efficiency. Metabolizes a broad spectrum of natural and synthetic therapeutic steroid and plays an important role in metabolism of androgens, estrogens, progestereone and conjugated steroids. Catalyzes the biotransformation of the pesticide chlordecone (kepone) to its corresponding alcohol leading to increased biliary excretion of the pesticide and concomitant reduction of its neurotoxicity since bile is the major excretory route. In Macaca fascicularis (Crab-eating macaque), this protein is Aldo-keto reductase family 1 member C4 (AKR1C4).